Consider the following 70-residue polypeptide: Metallothionein-like protein 1 (70 aa).

The protein belongs to the metallothionein superfamily. Type 15 family.

Functionally, metallothioneins have a high content of cysteine residues that bind various heavy metals. This Festuca rubra (Red fescue) protein is Metallothionein-like protein 1 (MT1).